We begin with the raw amino-acid sequence, 174 residues long: Methylamine utilization protein MauL (174 aa).

The protein operates within one-carbon metabolism; methylamine degradation. In terms of biological role, probably involved in TTQ prosthetic group biosynthesis. This is Methylamine utilization protein MauL (mauL) from Methylophilus methylotrophus (Bacterium W3A1).